We begin with the raw amino-acid sequence, 353 residues long: L-tryptophan dehydrogenase (353 aa).

Arginine 44 contributes to the NAD(+) binding site. The Proton donor/acceptor role is filled by lysine 80. NAD(+) contacts are provided by residues aspartate 114, threonine 146, 176–181 (GLGNVG), lysine 204, and 255–257 (AAN).

The protein belongs to the Glu/Leu/Phe/Val dehydrogenases family. Homodimer.

It catalyses the reaction L-tryptophan + NAD(+) + H2O = indole-3-pyruvate + NH4(+) + NADH + H(+). In terms of biological role, catalyzes the reversible oxidative deamination of L-tryptophan to indole-3-pyruvate in the presence of NAD(+). Cannot use other L-amino acids and D-Trp. Involved in the biosynthesis of scytonemin, a cyanobacterial radiation-absorbing pigment. The sequence is that of L-tryptophan dehydrogenase from Nostoc punctiforme (strain ATCC 29133 / PCC 73102).